The following is a 130-amino-acid chain: Small ribosomal subunit protein uS9 (130 aa).

The protein belongs to the universal ribosomal protein uS9 family.

The protein is Small ribosomal subunit protein uS9 of Pseudomonas aeruginosa (strain LESB58).